Here is a 194-residue protein sequence, read N- to C-terminus: Adenylate kinase (194 aa).

8–16 (GIPGVGKTT) serves as a coordination point for ATP.

This sequence belongs to the archaeal adenylate kinase family.

It is found in the cytoplasm. It catalyses the reaction AMP + ATP = 2 ADP. The sequence is that of Adenylate kinase (adkA) from Sulfurisphaera tokodaii (strain DSM 16993 / JCM 10545 / NBRC 100140 / 7) (Sulfolobus tokodaii).